The following is a 420-amino-acid chain: Glutamate-1-semialdehyde 2,1-aminomutase (420 aa).

An N6-(pyridoxal phosphate)lysine modification is found at lysine 259.

The protein belongs to the class-III pyridoxal-phosphate-dependent aminotransferase family. HemL subfamily. It depends on pyridoxal 5'-phosphate as a cofactor.

It is found in the cytoplasm. It carries out the reaction (S)-4-amino-5-oxopentanoate = 5-aminolevulinate. It participates in porphyrin-containing compound metabolism; protoporphyrin-IX biosynthesis; 5-aminolevulinate from L-glutamyl-tRNA(Glu): step 2/2. The polypeptide is Glutamate-1-semialdehyde 2,1-aminomutase (Sulfolobus acidocaldarius (strain ATCC 33909 / DSM 639 / JCM 8929 / NBRC 15157 / NCIMB 11770)).